The sequence spans 155 residues: Interleukin-2 (155 aa).

A signal peptide spans methionine 1–serine 20. Residue threonine 23 is glycosylated (O-linked (GalNAc...) threonine). Cysteines 78 and 126 form a disulfide.

Belongs to the IL-2 family.

Its subcellular location is the secreted. Cytokine produced by activated CD4-positive helper T-cells and to a lesser extend activated CD8-positive T-cells and natural killer (NK) cells that plays pivotal roles in the immune response and tolerance. Binds to a receptor complex composed of either the high-affinity trimeric IL-2R (IL2RA/CD25, IL2RB/CD122 and IL2RG/CD132) or the low-affinity dimeric IL-2R (IL2RB and IL2RG). Interaction with the receptor leads to oligomerization and conformation changes in the IL-2R subunits resulting in downstream signaling starting with phosphorylation of JAK1 and JAK3. In turn, JAK1 and JAK3 phosphorylate the receptor to form a docking site leading to the phosphorylation of several substrates including STAT5. This process leads to activation of several pathways including STAT, phosphoinositide-3-kinase/PI3K and mitogen-activated protein kinase/MAPK pathways. Functions as a T-cell growth factor and can increase NK-cell cytolytic activity as well. Promotes strong proliferation of activated B-cells and subsequently immunoglobulin production. Plays a pivotal role in regulating the adaptive immune system by controlling the survival and proliferation of regulatory T-cells, which are required for the maintenance of immune tolerance. Moreover, participates in the differentiation and homeostasis of effector T-cell subsets, including Th1, Th2, Th17 as well as memory CD8-positive T-cells. This Meriones unguiculatus (Mongolian jird) protein is Interleukin-2 (IL2).